The chain runs to 594 residues: Bifunctional lycopene cyclase/phytoene synthase (594 aa).

A lycopene beta-cyclase region spans residues 1 to 249 (MGLDYLMVHV…VVFGIAAMHN (249 aa)). Transmembrane regions (helical) follow at residues 3 to 23 (LDYLMVHVKYNLPPALLLTIL), 35 to 55 (KIVLLCTIAVVWTIPWDSYLI), 77 to 97 (LEEVFFFIIQTYNTSLLYIIF), 130 to 150 (LGTLFFTGILILGISFIYIGG), 153 to 173 (MYLGLILSWVSPILVMQWVLM), 176 to 196 (FLLALPPASVWVPIALPTLYL), and 227 to 247 (IEEALFFLVTNVMVVFGIAAM). The segment at 256–594 (YKAFISTTAM…RFKRAWLAML (339 aa)) is phytoene synthase.

It in the N-terminal section; belongs to the lycopene beta-cyclase family. The protein in the C-terminal section; belongs to the phytoene/squalene synthase family.

The protein resides in the membrane. The enzyme catalyses all-trans-lycopene = gamma-carotene. The catalysed reaction is gamma-carotene = all-trans-beta-carotene. It catalyses the reaction 2 (2E,6E,10E)-geranylgeranyl diphosphate = 15-cis-phytoene + 2 diphosphate. It functions in the pathway carotenoid biosynthesis; beta-carotene biosynthesis. It participates in carotenoid biosynthesis; phytoene biosynthesis; all-trans-phytoene from geranylgeranyl diphosphate: step 1/1. Bifunctional enzyme that catalyzes the reactions from geranylgeranyl diphosphate to phytoene (phytoene synthase) and lycopene to beta-carotene via the intermediate gamma-carotene (lycopene cyclase). This chain is Bifunctional lycopene cyclase/phytoene synthase, found in Arthroderma gypseum (strain ATCC MYA-4604 / CBS 118893) (Microsporum gypseum).